The sequence spans 333 residues: 4-hydroxythreonine-4-phosphate dehydrogenase (333 aa).

Substrate contacts are provided by H133 and T134. A divalent metal cation is bound by residues H169, H214, and H269. Substrate-binding residues include K277, N286, and R295.

The protein belongs to the PdxA family. As to quaternary structure, homodimer. Zn(2+) is required as a cofactor. The cofactor is Mg(2+). Requires Co(2+) as cofactor.

It is found in the cytoplasm. It catalyses the reaction 4-(phosphooxy)-L-threonine + NAD(+) = 3-amino-2-oxopropyl phosphate + CO2 + NADH. It functions in the pathway cofactor biosynthesis; pyridoxine 5'-phosphate biosynthesis; pyridoxine 5'-phosphate from D-erythrose 4-phosphate: step 4/5. Catalyzes the NAD(P)-dependent oxidation of 4-(phosphooxy)-L-threonine (HTP) into 2-amino-3-oxo-4-(phosphooxy)butyric acid which spontaneously decarboxylates to form 3-amino-2-oxopropyl phosphate (AHAP). This is 4-hydroxythreonine-4-phosphate dehydrogenase from Caulobacter vibrioides (strain ATCC 19089 / CIP 103742 / CB 15) (Caulobacter crescentus).